A 169-amino-acid chain; its full sequence is E1B protein, small T-antigen (169 aa).

Belongs to the adenoviridae E1B 19 kDa protein family.

The sequence is that of E1B protein, small T-antigen from Canine adenovirus serotype 1 (strain CLL) (CAdV-1).